We begin with the raw amino-acid sequence, 133 residues long: MSTVNLDIVTPNGSVYEKDDVELVVFQTTAGEMGVMSGHIPTVAALKTGHVKVNFRNGTEYIAVSGGFVEIRQHKVSVIVQTAETASEIDVERAKLARQRAQSHLEDQDNSDINRAKRALARAENRLRVAELK.

This sequence belongs to the ATPase epsilon chain family. F-type ATPases have 2 components, CF(1) - the catalytic core - and CF(0) - the membrane proton channel. CF(1) has five subunits: alpha(3), beta(3), gamma(1), delta(1), epsilon(1). CF(0) has three main subunits: a, b and c.

It localises to the cell membrane. Produces ATP from ADP in the presence of a proton gradient across the membrane. This is ATP synthase epsilon chain from Staphylococcus haemolyticus (strain JCSC1435).